Reading from the N-terminus, the 307-residue chain is Transcription factor MYB78 (307 aa).

HTH myb-type domains lie at 23–79 (EMDV…RPDV) and 80–130 (RRGN…QKHA). 2 DNA-binding regions (H-T-H motif) span residues 51 to 75 (WNSLARCAELKRTGKSCRLRWLNYL) and 103 to 126 (WSKIAQYLPGRTDNEIKNYWRTRV).

Its subcellular location is the nucleus. This chain is Transcription factor MYB78, found in Arabidopsis thaliana (Mouse-ear cress).